A 428-amino-acid polypeptide reads, in one-letter code: Zinc metalloproteinase nas-27 (428 aa).

Residues 1-17 (MQILPIFFPLLITSLHA) form the signal peptide. A propeptide spanning residues 18–57 (IPRGRRAVRNRNEGDINSLVGVGQYLYQGDIAVVKSRARR) is cleaved from the precursor. Residues 58-255 (AVIRQKHKKW…SRMNVLYNCH (198 aa)) enclose the Peptidase M12A domain. 6 cysteine pairs are disulfide-bonded: C99/C254, C120/C141, C258/C276, C281/C290, C306/C339, and C366/C386. Residue H150 coordinates Zn(2+). The active site involves E151. Zn(2+) is bound by residues H154 and H160. N-linked (GlcNAc...) asparagine glycosylation occurs at N181. In terms of domain architecture, EGF-like spans 250 to 291 (VLYNCHERCANTLNRCQQGGYPAPSDCSQCVCPDGFGGNFCE). Positions 306 to 428 (CGGVLWASET…LDFNIEYRAV (123 aa)) constitute a CUB domain. N-linked (GlcNAc...) asparagine glycosylation occurs at N377.

Zn(2+) serves as cofactor.

The protein localises to the secreted. Metalloprotease. The protein is Zinc metalloproteinase nas-27 (nas-27) of Caenorhabditis elegans.